A 353-amino-acid polypeptide reads, in one-letter code: MLQLLKSSWVRSAGSGVVTWRASAGLFCPGTRQASDTSDTLHHPSPSSESQVQPVRVCSMMHLPLQSSPEGLDAAFVGVPLDTGTSNRPGARFGPRRIREESLMLGTVNPSTGALPFQSLRVADLGNVNVNLYNLQDSCRLIREAYQNILATGCIPLTLGGDHTITYPILQAVAKEHGPVGLVHVGAHSNTSDKPLEDKVYHRTPFRRSVDEGLLDSKRVVQIGIRGSSRTLDPYRYSRSQGFRVVLAEDCWMKSLVPLMAEIRQQMGGVPLYISFAIDALDPAYAPGTGTPEIAGLTPSQALEIIRGCQGLNVVGCDLVEVSPPYDLSGNTALLAANLLFEMLCALPKVTTV.

A mitochondrion-targeting transit peptide spans 1-33 (MLQLLKSSWVRSAGSGVVTWRASAGLFCPGTRQ). Positions 29–52 (PGTRQASDTSDTLHHPSPSSESQV) are disordered. Positions 163 and 188 each coordinate Mn(2+). Lys194 bears the N6-acetyllysine mark. Lys218 is subject to N6-acetyllysine; alternate. Position 218 is an N6-succinyllysine; alternate (Lys218). A Mn(2+)-binding site is contributed by Asp279.

It belongs to the arginase family. Agmatinase subfamily. It depends on Mn(2+) as a cofactor.

Its subcellular location is the mitochondrion. It catalyses the reaction 3-guanidinopropanoate + H2O = urea + beta-alanine. It carries out the reaction 4-guanidinobutanoate + H2O = urea + 4-aminobutanoate. The enzyme catalyses taurocyamine + H2O = urea + taurine. The catalysed reaction is L-arginine + H2O = urea + L-ornithine. The protein operates within nitrogen metabolism; urea cycle; L-ornithine and urea from L-arginine: step 1/1. Hydrolyzes linear guanidino acids to form urea and the corresponding amines. Displays specificity for substrates having a negatively charged head group and short chains including taurocyamine, guanidino propanoic and butanoic acids. May protect cells by detoxifying potentially harmful amounts of guanidino acids. Metabolizes L-arginine with low efficiency. The sequence is that of Guanidino acid hydrolase, mitochondrial (Agmat) from Rattus norvegicus (Rat).